We begin with the raw amino-acid sequence, 391 residues long: Ferrochelatase (391 aa).

Residues His-196 and Glu-281 each coordinate Fe cation.

It belongs to the ferrochelatase family.

The protein resides in the cytoplasm. The catalysed reaction is heme b + 2 H(+) = protoporphyrin IX + Fe(2+). It participates in porphyrin-containing compound metabolism; protoheme biosynthesis; protoheme from protoporphyrin-IX: step 1/1. Catalyzes the ferrous insertion into protoporphyrin IX. This Prochlorococcus marinus (strain MIT 9312) protein is Ferrochelatase.